Consider the following 507-residue polypeptide: Maturase K (507 aa).

The protein belongs to the intron maturase 2 family. MatK subfamily.

The protein localises to the plastid. The protein resides in the chloroplast. Its function is as follows. Usually encoded in the trnK tRNA gene intron. Probably assists in splicing its own and other chloroplast group II introns. The protein is Maturase K of Cananga odorata (Ylang-ylang tree).